We begin with the raw amino-acid sequence, 177 residues long: Large ribosomal subunit protein uL6 (177 aa).

This sequence belongs to the universal ribosomal protein uL6 family. Part of the 50S ribosomal subunit.

This protein binds to the 23S rRNA, and is important in its secondary structure. It is located near the subunit interface in the base of the L7/L12 stalk, and near the tRNA binding site of the peptidyltransferase center. This is Large ribosomal subunit protein uL6 from Rickettsia africae (strain ESF-5).